Reading from the N-terminus, the 386-residue chain is Succinate--CoA ligase [ADP-forming] subunit beta (386 aa).

In terms of domain architecture, ATP-grasp spans 9 to 244 (KEILRKYGVP…HDEEDPLETR (236 aa)). Residues Lys46, 53 to 55 (GRG), Glu99, Cys102, and Glu107 each bind ATP. Residues Asn199 and Asp213 each coordinate Mg(2+). Substrate contacts are provided by residues Asn264 and 321–323 (GIM).

It belongs to the succinate/malate CoA ligase beta subunit family. As to quaternary structure, heterotetramer of two alpha and two beta subunits. Requires Mg(2+) as cofactor.

The enzyme catalyses succinate + ATP + CoA = succinyl-CoA + ADP + phosphate. It carries out the reaction GTP + succinate + CoA = succinyl-CoA + GDP + phosphate. It participates in carbohydrate metabolism; tricarboxylic acid cycle; succinate from succinyl-CoA (ligase route): step 1/1. Functionally, succinyl-CoA synthetase functions in the citric acid cycle (TCA), coupling the hydrolysis of succinyl-CoA to the synthesis of either ATP or GTP and thus represents the only step of substrate-level phosphorylation in the TCA. The beta subunit provides nucleotide specificity of the enzyme and binds the substrate succinate, while the binding sites for coenzyme A and phosphate are found in the alpha subunit. The polypeptide is Succinate--CoA ligase [ADP-forming] subunit beta (Rickettsia peacockii (strain Rustic)).